The following is a 538-amino-acid chain: Dolichol kinase (538 aa).

Over 1 to 13 (MTRECPSPAPGPG) the chain is Lumenal. Residues 14-34 (APLSGSVLAEAAVVFAVVLSI) traverse the membrane as a helical segment. Over 35 to 74 (HATVWDRYSWCAVALAVQAFYVQYKWDRLLQQGSAVFQFR) the chain is Cytoplasmic. A helical membrane pass occupies residues 75–95 (MSANSGLLPASMVMPLLGLVM). The Lumenal segment spans residues 96-111 (KERCQTAGNPFFERFG). Residues 112–132 (IVVAATGMAVALFSSVLALGI) traverse the membrane as a helical segment. Residues 133-134 (TR) lie on the Cytoplasmic side of the membrane. Residues 135 to 155 (PVPTNTCVILGLAGGVIIYIM) traverse the membrane as a helical segment. Over 156–163 (KHSLSVGE) the chain is Lumenal. The helical transmembrane segment at 164-184 (VIEVLEVLLIFVYLNMILLYL) threads the bilayer. Topologically, residues 185-188 (LPRC) are cytoplasmic. Residues 189–209 (FTPGEALLVLGGISFVLNQLI) form a helical membrane-spanning segment. The Lumenal segment spans residues 210-224 (KRSLTLVESQGDPVD). Residues 225 to 245 (FFLLVVVVGMVLMGIFFSTLF) form a helical membrane-spanning segment. Topologically, residues 246 to 254 (VFMDSGTWA) are cytoplasmic. Residues 255–275 (SSIFFHLMTCVLSLGVVLPWL) form a helical membrane-spanning segment. Residues 276-297 (HRLIRRNPLLWLLQFLFQTDTR) are Lumenal-facing. A helical transmembrane segment spans residues 298 to 318 (IYLLAYWSLLATLACLVVLYQ). The Cytoplasmic portion of the chain corresponds to 319 to 337 (NAKRSSSESKKHQAPTIAR). The helical transmembrane segment at 338–354 (KYFHLIVVATYIPGIIF) threads the bilayer. Topologically, residues 355-359 (DRPLL) are lumenal. A helical transmembrane segment spans residues 360–380 (YVAATVCLAVFIFLEYVRYFR). At 381–401 (IKPLGHTLRSFLSLFLDERDS) the chain is on the cytoplasmic side. A helical membrane pass occupies residues 402-422 (GPLILTHIYLLLGMSLPIWLI). Topologically, residues 423–436 (PRPCTQKGSLGGAR) are lumenal. Residues 437–457 (ALVPYAGVLAVGVGDTVASIF) traverse the membrane as a helical segment. The Cytoplasmic segment spans residues 458 to 472 (GSTMGEIRWPGTKKT). The interval 459 to 474 (STMGEIRWPGTKKTFE) is CTP-binding. The chain crosses the membrane as a helical span at residues 473 to 493 (FEGTMTSIFAQIISVALILIF). The Lumenal portion of the chain corresponds to 494–495 (DS). The chain crosses the membrane as a helical span at residues 496–516 (GVDLNYSYAWILGSISTVSLL). The Cytoplasmic portion of the chain corresponds to 517–538 (EAYTTQIDNLLLPLYLLILLMA).

It belongs to the polyprenol kinase family. As to expression, ubiquitous.

It is found in the endoplasmic reticulum membrane. It catalyses the reaction a di-trans,poly-cis-dolichol + CTP = a di-trans,poly-cis-dolichyl phosphate + CDP + H(+). The protein operates within protein modification; protein glycosylation. Functionally, catalyzes CTP-mediated phosphorylation of dolichol, the terminal step in de novo dolichyl monophosphate (Dol-P) biosynthesis. Dol-P is a lipid carrier essential for the synthesis of N-linked and O-linked oligosaccharides and for GPI anchors. The polypeptide is Dolichol kinase (DOLK) (Homo sapiens (Human)).